A 297-amino-acid chain; its full sequence is N-acetylmuramic acid 6-phosphate etherase (297 aa).

The SIS domain occupies 56–219 (AIEAFNKGGR…STISMIGIGK (164 aa)). The active-site Proton donor is Glu84. Residue Glu115 is part of the active site.

This sequence belongs to the GCKR-like family. MurNAc-6-P etherase subfamily. As to quaternary structure, homodimer.

It carries out the reaction N-acetyl-D-muramate 6-phosphate + H2O = N-acetyl-D-glucosamine 6-phosphate + (R)-lactate. It functions in the pathway amino-sugar metabolism; N-acetylmuramate degradation. Functionally, specifically catalyzes the cleavage of the D-lactyl ether substituent of MurNAc 6-phosphate, producing GlcNAc 6-phosphate and D-lactate. In Lactococcus lactis subsp. cremoris (strain SK11), this protein is N-acetylmuramic acid 6-phosphate etherase.